A 588-amino-acid chain; its full sequence is Oxidoreductase NdmD (588 aa).

A Rieske domain is found at Trp-9–Thr-114. The [2Fe-2S] cluster site is built by Cys-50, His-52, Cys-69, and His-72. Residues Pro-272–Val-373 form the FAD-binding FR-type domain. The 2Fe-2S ferredoxin-type domain maps to Tyr-503 to Leu-588. [2Fe-2S] cluster contacts are provided by Cys-537, Cys-542, Cys-545, and Cys-575.

The cofactor is [2Fe-2S] cluster.

Functionally, involved in the caffeine degradation, which is the essential first step for assimilating the carbon and nitrogen in caffeine. Catalyzes the oxidation of NADH and transfers electrons to NdmA and NdmB, which catalyze the N-demethylation reactions. In Pseudomonas putida (Arthrobacter siderocapsulatus), this protein is Oxidoreductase NdmD (ndmD).